We begin with the raw amino-acid sequence, 84 residues long: Cytochrome b559 subunit alpha (84 aa).

Residues 22–36 (VIHSITIPSLFVAGW) form a helical membrane-spanning segment. Residue His24 participates in heme binding.

The protein belongs to the PsbE/PsbF family. As to quaternary structure, heterodimer of an alpha subunit and a beta subunit. PSII is composed of 1 copy each of membrane proteins PsbA, PsbB, PsbC, PsbD, PsbE, PsbF, PsbH, PsbI, PsbJ, PsbK, PsbL, PsbM, PsbT, PsbX, PsbY, PsbZ, Psb30/Ycf12, at least 3 peripheral proteins of the oxygen-evolving complex and a large number of cofactors. It forms dimeric complexes. Heme b is required as a cofactor.

The protein resides in the plastid. It is found in the chloroplast thylakoid membrane. Its function is as follows. This b-type cytochrome is tightly associated with the reaction center of photosystem II (PSII). PSII is a light-driven water:plastoquinone oxidoreductase that uses light energy to abstract electrons from H(2)O, generating O(2) and a proton gradient subsequently used for ATP formation. It consists of a core antenna complex that captures photons, and an electron transfer chain that converts photonic excitation into a charge separation. The chain is Cytochrome b559 subunit alpha from Gracilaria tenuistipitata var. liui (Red alga).